We begin with the raw amino-acid sequence, 142 residues long: ATP synthase epsilon chain (142 aa).

The protein belongs to the ATPase epsilon chain family. As to quaternary structure, F-type ATPases have 2 components, CF(1) - the catalytic core - and CF(0) - the membrane proton channel. CF(1) has five subunits: alpha(3), beta(3), gamma(1), delta(1), epsilon(1). CF(0) has three main subunits: a, b and c.

It localises to the cell inner membrane. Functionally, produces ATP from ADP in the presence of a proton gradient across the membrane. This Koribacter versatilis (strain Ellin345) protein is ATP synthase epsilon chain.